A 68-amino-acid polypeptide reads, in one-letter code: Protein transport protein Sec61 gamma-2 subunit (68 aa).

Residues 1–32 lie on the Cytoplasmic side of the membrane; that stretch reads MDKVVKFAEPGRAFAKDSIRLVKRCTKPDRKE. Residues 33–61 traverse the membrane as a helical segment; the sequence is FQKIAIATAVGFCIMGFIGFFVKLIHIPI. Topologically, residues 62 to 68 are extracellular; that stretch reads NNIIVGS.

It belongs to the SecE/SEC61-gamma family. Heterotrimeric complex composed of SEC61-alpha, SEC61-beta and SEC61-gamma.

It localises to the endoplasmic reticulum membrane. Functionally, necessary for protein translocation in the endoplasmic reticulum. The sequence is that of Protein transport protein Sec61 gamma-2 subunit (Sec61gamma) from Drosophila melanogaster (Fruit fly).